We begin with the raw amino-acid sequence, 297 residues long: Averufin oxidase stcO (297 aa).

The chain crosses the membrane as a helical span at residues 277-297; the sequence is VVVLGVCILLLLGGLLYSIKA.

It belongs to the avfA family.

The protein resides in the membrane. The protein operates within mycotoxin biosynthesis; sterigmatocystin biosynthesis. In terms of biological role, averufin oxidase; part of the gene cluster that mediates the biosynthesis of sterigmatocystin (ST), a polyketide-derived furanocoumarin which is part of the most toxic and carcinogenic compounds among the known mycotoxins. The first step in the biosynthesis of sterigmatocystin is the production of hexanoate by the fatty acid synthase (FAS) units stcJ and stcK. The polyketide backbone is assembled by the non-reducing polyketide synthase stcA by condensation of the starter hexanoyl-CoA and 7 malonyl-CoA extender units followed by cyclization and release of norsolorinic acid. Norsolorinic acid is the first stable intermediate in the biosynthesis of sterigmatocystin and is converted into averantin (AVN) by the ketoreductase stcE which reduces the hexanoate ketone to an alcohol. Averantin is then oxidized into 5'-hydroxyaverantin (HAVN) by the cytochrome P450 monooxygenase stcF. 5'-hydroxyaverantin is further converted to 5'-oxyaverantin (OAVN) by the 5'-hydroxyaverantin dehydrogenase stcG. The next step is the conversion of OAVN into averufin (AVF) which is catalyzed by a yet to be identified enzyme. The cytochrome P450 monooxygenase stcB and the flavin-binding monooxygenase stcW are both required for the conversion of averufin to 1-hydroxyversicolorone. The esterase stcI probably catalyzes the formation of versiconal hemiacetal acetate from 1-hydroxyversicolorone. The oxydoreductase stcN then probably catalyzes the biosynthetic step from versiconal to versicolorin B (VERB). The next step is performed by the versicolorin B desaturase stcL to produce versicolorin A (VERA). The ketoreductase stcU and the cytochrome P450 monooxygenase stcS are involved in the conversion of versicolorin A to demethylsterigmatocystin. The Baeyer-Villiger oxidas stcQ and the reductase stcR might be involved in the biosynthetic step from versicolorin A to demethylsterigmatocystin. The final step in the biosynthesis of sterigmatocystin is the methylation of demethylsterigmatocystin catalyzed by the methyltransferase stcP. In Emericella nidulans (strain FGSC A4 / ATCC 38163 / CBS 112.46 / NRRL 194 / M139) (Aspergillus nidulans), this protein is Averufin oxidase stcO.